A 328-amino-acid chain; its full sequence is D-cysteine desulfhydrase (328 aa).

Lysine 51 bears the N6-(pyridoxal phosphate)lysine mark.

The protein belongs to the ACC deaminase/D-cysteine desulfhydrase family. As to quaternary structure, homodimer. It depends on pyridoxal 5'-phosphate as a cofactor.

The catalysed reaction is D-cysteine + H2O = hydrogen sulfide + pyruvate + NH4(+) + H(+). In terms of biological role, catalyzes the alpha,beta-elimination reaction of D-cysteine and of several D-cysteine derivatives. It could be a defense mechanism against D-cysteine. This chain is D-cysteine desulfhydrase, found in Shigella sonnei (strain Ss046).